A 399-amino-acid chain; its full sequence is Elongation factor Tu (399 aa).

The tr-type G domain occupies 10-209 (KPHVNIGTIG…EVDAYIPTPE (200 aa)). The interval 19–26 (GHVDHGKT) is G1. Residue 19 to 26 (GHVDHGKT) coordinates GTP. A Mg(2+)-binding site is contributed by T26. The tract at residues 60-64 (GITIA) is G2. Positions 81–84 (DCPG) are G3. Residues 81-85 (DCPGH) and 136-139 (NKQD) each bind GTP. The segment at 136-139 (NKQD) is G4. The interval 174–176 (SAL) is G5.

The protein belongs to the TRAFAC class translation factor GTPase superfamily. Classic translation factor GTPase family. EF-Tu/EF-1A subfamily. Monomer.

It localises to the cytoplasm. It carries out the reaction GTP + H2O = GDP + phosphate + H(+). GTP hydrolase that promotes the GTP-dependent binding of aminoacyl-tRNA to the A-site of ribosomes during protein biosynthesis. This is Elongation factor Tu from Helicobacter pylori (strain Shi470).